The primary structure comprises 138 residues: Transcription antitermination protein NusB (138 aa).

This sequence belongs to the NusB family.

Its function is as follows. Involved in transcription antitermination. Required for transcription of ribosomal RNA (rRNA) genes. Binds specifically to the boxA antiterminator sequence of the ribosomal RNA (rrn) operons. This chain is Transcription antitermination protein NusB, found in Blochmanniella floridana.